A 121-amino-acid polypeptide reads, in one-letter code: Large ribosomal subunit protein bL12 (121 aa).

The protein belongs to the bacterial ribosomal protein bL12 family. As to quaternary structure, homodimer. Part of the ribosomal stalk of the 50S ribosomal subunit. Forms a multimeric L10(L12)X complex, where L10 forms an elongated spine to which 2 to 4 L12 dimers bind in a sequential fashion. Binds GTP-bound translation factors.

Its function is as follows. Forms part of the ribosomal stalk which helps the ribosome interact with GTP-bound translation factors. Is thus essential for accurate translation. The chain is Large ribosomal subunit protein bL12 from Pseudomonas savastanoi pv. phaseolicola (strain 1448A / Race 6) (Pseudomonas syringae pv. phaseolicola (strain 1448A / Race 6)).